The primary structure comprises 727 residues: Procollagen-lysine,2-oxoglutarate 5-dioxygenase 1 (727 aa).

The N-terminal stretch at 1-18 (MRPLLLLAPLGWLLLAEA) is a signal peptide. Residues asparagine 163, asparagine 197, and asparagine 538 are each glycosylated (N-linked (GlcNAc...) asparagine). The Fe2OG dioxygenase domain occupies 636–727 (QFDLAFVVRY…RYIAVSFVDP (92 aa)). Fe cation is bound by residues histidine 656 and aspartate 658. The N-linked (GlcNAc...) asparagine glycan is linked to asparagine 686. Histidine 708 is a Fe cation binding site. Residue arginine 718 is part of the active site.

As to quaternary structure, homodimer. Identified in a complex with P3H3 and P3H4. Requires Fe(2+) as cofactor. L-ascorbate serves as cofactor.

It localises to the rough endoplasmic reticulum membrane. It catalyses the reaction L-lysyl-[collagen] + 2-oxoglutarate + O2 = (5R)-5-hydroxy-L-lysyl-[collagen] + succinate + CO2. Functionally, part of a complex composed of PLOD1, P3H3 and P3H4 that catalyzes hydroxylation of lysine residues in collagen alpha chains and is required for normal assembly and cross-linkling of collagen fibrils. Forms hydroxylysine residues in -Xaa-Lys-Gly- sequences in collagens. These hydroxylysines serve as sites of attachment for carbohydrate units and are essential for the stability of the intermolecular collagen cross-links. This chain is Procollagen-lysine,2-oxoglutarate 5-dioxygenase 1 (PLOD1), found in Pongo abelii (Sumatran orangutan).